Here is a 387-residue protein sequence, read N- to C-terminus: Protein MGF 360-4L (387 aa).

This sequence belongs to the asfivirus MGF 360 family.

In terms of biological role, plays a role in virus cell tropism, and may be required for efficient virus replication in macrophages. This chain is Protein MGF 360-4L, found in Ornithodoros (relapsing fever ticks).